The chain runs to 308 residues: Membrane protein insertase YidC 1 (308 aa).

An N-terminal signal peptide occupies residues 1 to 22 (MKSIKRFALSAMGVAMLLVLTG). Residue Cys-23 is the site of N-palmitoyl cysteine attachment. Cys-23 is lipidated: S-diacylglycerol cysteine. Helical transmembrane passes span 60-80 (FGVA…PLGI), 135-155 (FGGV…AIYF), 168-188 (YLGI…GVLY), 211-226 (MIYM…SLFS), and 232-252 (LYWV…NYIV). The interval 263–308 (ELAKNPPKASAFSKPSGRKDVTPEQPTAITSKKKHKNRNAGKQRSR) is disordered. Residues 293-308 (SKKKHKNRNAGKQRSR) are compositionally biased toward basic residues.

This sequence belongs to the OXA1/ALB3/YidC family. Type 2 subfamily.

The protein resides in the cell membrane. Required for the insertion and/or proper folding and/or complex formation of integral membrane proteins into the membrane. Involved in integration of membrane proteins that insert both dependently and independently of the Sec translocase complex, as well as at least some lipoproteins. This chain is Membrane protein insertase YidC 1, found in Streptococcus pneumoniae serotype 4 (strain ATCC BAA-334 / TIGR4).